Reading from the N-terminus, the 314-residue chain is tRNA-cytidine(32) 2-sulfurtransferase (314 aa).

The short motif at 49–54 is the PP-loop motif element; that stretch reads SGGKDS. [4Fe-4S] cluster-binding residues include cysteine 124, cysteine 127, and cysteine 215.

The protein belongs to the TtcA family. Homodimer. It depends on Mg(2+) as a cofactor. Requires [4Fe-4S] cluster as cofactor.

The protein resides in the cytoplasm. It catalyses the reaction cytidine(32) in tRNA + S-sulfanyl-L-cysteinyl-[cysteine desulfurase] + AH2 + ATP = 2-thiocytidine(32) in tRNA + L-cysteinyl-[cysteine desulfurase] + A + AMP + diphosphate + H(+). Its pathway is tRNA modification. In terms of biological role, catalyzes the ATP-dependent 2-thiolation of cytidine in position 32 of tRNA, to form 2-thiocytidine (s(2)C32). The sulfur atoms are provided by the cysteine/cysteine desulfurase (IscS) system. The polypeptide is tRNA-cytidine(32) 2-sulfurtransferase (Histophilus somni (strain 129Pt) (Haemophilus somnus)).